We begin with the raw amino-acid sequence, 599 residues long: Elongation factor 4 (599 aa).

Residues 2–184 form the tr-type G domain; it reads KNIRNFSIIA…RLVRDIPPPQ (183 aa). GTP is bound by residues 14–19 and 131–134; these read DHGKST and NKID.

Belongs to the TRAFAC class translation factor GTPase superfamily. Classic translation factor GTPase family. LepA subfamily.

It localises to the cell inner membrane. The catalysed reaction is GTP + H2O = GDP + phosphate + H(+). In terms of biological role, required for accurate and efficient protein synthesis under certain stress conditions. May act as a fidelity factor of the translation reaction, by catalyzing a one-codon backward translocation of tRNAs on improperly translocated ribosomes. Back-translocation proceeds from a post-translocation (POST) complex to a pre-translocation (PRE) complex, thus giving elongation factor G a second chance to translocate the tRNAs correctly. Binds to ribosomes in a GTP-dependent manner. The protein is Elongation factor 4 of Salmonella paratyphi A (strain ATCC 9150 / SARB42).